The sequence spans 124 residues: MPKDFPRARRVADQIQRELPELIRQEVKDPRVGMLTITEVEVNRDMEFAKVYFTTMGGEAEHAACLQGLQRASGFLRSQLSHRMQLRVVPKLTFVYDRSVEHGMALSRLIETAVAEDAKHPKDE.

It belongs to the RbfA family. In terms of assembly, monomer. Binds 30S ribosomal subunits, but not 50S ribosomal subunits or 70S ribosomes.

It is found in the cytoplasm. In terms of biological role, one of several proteins that assist in the late maturation steps of the functional core of the 30S ribosomal subunit. Associates with free 30S ribosomal subunits (but not with 30S subunits that are part of 70S ribosomes or polysomes). Required for efficient processing of 16S rRNA. May interact with the 5'-terminal helix region of 16S rRNA. This Thiobacillus denitrificans (strain ATCC 25259 / T1) protein is Ribosome-binding factor A.